Here is a 194-residue protein sequence, read N- to C-terminus: Protein GrpE (194 aa).

The interval Met1–Asp39 is disordered. Positions Gln8–Val20 are enriched in acidic residues.

This sequence belongs to the GrpE family. Homodimer.

The protein resides in the cytoplasm. Functionally, participates actively in the response to hyperosmotic and heat shock by preventing the aggregation of stress-denatured proteins, in association with DnaK and GrpE. It is the nucleotide exchange factor for DnaK and may function as a thermosensor. Unfolded proteins bind initially to DnaJ; upon interaction with the DnaJ-bound protein, DnaK hydrolyzes its bound ATP, resulting in the formation of a stable complex. GrpE releases ADP from DnaK; ATP binding to DnaK triggers the release of the substrate protein, thus completing the reaction cycle. Several rounds of ATP-dependent interactions between DnaJ, DnaK and GrpE are required for fully efficient folding. The chain is Protein GrpE from Saccharophagus degradans (strain 2-40 / ATCC 43961 / DSM 17024).